A 101-amino-acid polypeptide reads, in one-letter code: Protein translation factor SUI1 homolog (101 aa).

Belongs to the SUI1 family.

The protein is Protein translation factor SUI1 homolog of Aeropyrum pernix (strain ATCC 700893 / DSM 11879 / JCM 9820 / NBRC 100138 / K1).